A 419-amino-acid polypeptide reads, in one-letter code: Acetyltransferase fsoF (419 aa).

Residue Asn2 is glycosylated (N-linked (GlcNAc...) asparagine). The next 2 helical transmembrane spans lie at 4–24 and 62–82; these read TIISLALIFFQLTTTALVVGF and AFLGAASVFLVILYVDAAILS. The tract at residues 89 to 114 is disordered; sequence QSPTSSLGGLIPPTTRDTPKTQNNAT. N-linked (GlcNAc...) asparagine glycosylation is found at Asn112 and Asn169. A run of 4 helical transmembrane segments spans residues 230–250, 314–334, 337–357, and 386–406; these read YWAIQYAVIDLLYSLLAVVAV, YVFMTLVFAVSGVFHTLSDVS, IPLGESGAMRFFVLQAIGIML, and VSGPVWLVTWLTWTSPGWIYM.

The protein belongs to the wax synthase family.

It localises to the membrane. It carries out the reaction 3-O-(beta-D-glucopyranosyl)-2alpha-hydroxyisomotiol + acetyl-CoA = 3-O-(beta-D-glucopyranosyl)-2alpha-acetoxyisomotiol + CoA. The catalysed reaction is 2-deacetylfuscoatroside + acetyl-CoA = fuscoatroside + CoA. It functions in the pathway secondary metabolite biosynthesis; terpenoid biosynthesis. Functionally, terpene cyclase-glycosyl transferase fusion protein; part of the gene cluster that mediates the biosynthesis of the enfumafungin-type antibiotic, fuscoatroside. Within the pathway, fsoF catalyzes the acetylation of C2-alpha-OH following the C2 hydroxylation by the cytochrome monooxygenase fsoD. The fuscoatroside biosynthesis is initiated by the cyclization of 2,3(S)-oxidosqualene through FsoA's terpene cyclase (TC) domain, leading to the formation of the fernane skeleton isomotiol, harboring a fernane triterpene skeleton with a C8-C9 double bond. Subsequently, C2-alpha-hydroxylation mediated by fsoD results in the production of 2-alpha-hydroxy-isomotiol, which is further acetylated by fsoF. The glycosyltransferase (GT) domain of FsoA may convert isomotiol, 2-alpha-hydroxy-isomotiol, and the acetylated derivative of 2-alpha-hydroxy-isomotiol into their corresponding glycosides 3-O-(beta-D-glucopyranosyl)-isomotiol, 3-O-(beta-D-glucopyranosyl)-2-alpha-hydroxy-isomotiol, and 3-O-(beta-D-glucopyranosyl)-2-alpha-acetoxy-isomotiol, which then undergo oxidative cleavage under the action of fsoE to form s 2-deacetoxy-fuscoatroside, 2-deacetyl-fuscoatroside, and fuscoatroside, respectively. Although hydroxylation followed by acetylation of 3-O-(beta-D-glucopyranosyl)-isomotiol and 2-deacetoxy-fuscoatroside by fsoD and fsoF could not be ruled out, this process is likely to occur with difficulty due to bulky steric hindrance caused by the presence of a glycan at C3 in these compounds. Interestingly, fsoE can also utilize the aglycones isomotiol and 2-alpha-hydroxy-isomotiol as substrates to generate 19-beta-hydroxy-isomotiol and 2-alpha,19-beta-dihydroxy-isomotiol, respectively. These reactions occur with lower efficiency. Finally, fsoE can further convert 2-alpha,19-beta-dihydroxy-isomotiol into 2-alpha-hydroxy-ismotiol-19-one and 2-alpha-hydroxy-ismotiol-19-one into 2-deacetyl-3-deglucopyranosyl-fuscoatroside. The chain is Acetyltransferase fsoF from Humicola fuscoatra.